The chain runs to 75 residues: OcyC3 (75 aa).

Residues 1 to 22 (MQYKTFLVISLAYLLVADEAAA) form the signal peptide. The propeptide occupies 51-75 (EINNVFEPYHENLDLELERFLSQLQ).

Expressed by the venom gland.

It is found in the secreted. It localises to the target cell membrane. In terms of biological role, amphipathic peptide with probable antimicrobial activity. May act by disrupting the integrity of the bacterial cell membrane. The protein is OcyC3 of Opisthacanthus cayaporum (South American scorpion).